The primary structure comprises 214 residues: Putative 3-methyladenine DNA glycosylase (214 aa).

Belongs to the DNA glycosylase MPG family.

The protein is Putative 3-methyladenine DNA glycosylase of Gloeobacter violaceus (strain ATCC 29082 / PCC 7421).